Reading from the N-terminus, the 24-residue chain is Alpha-lactalbumin (24 aa).

This sequence belongs to the glycosyl hydrolase 22 family. As to quaternary structure, lactose synthase (LS) is a heterodimer of a catalytic component, beta1,4-galactosyltransferase (beta4Gal-T1) and a regulatory component, alpha-lactalbumin (LA). In terms of processing, glycosylated (50% of the proteins). Mammary gland specific. Secreted in milk.

The protein resides in the secreted. Regulatory subunit of lactose synthase, changes the substrate specificity of galactosyltransferase in the mammary gland making glucose a good acceptor substrate for this enzyme. This enables LS to synthesize lactose, the major carbohydrate component of milk. In other tissues, galactosyltransferase transfers galactose onto the N-acetylglucosamine of the oligosaccharide chains in glycoproteins. This is Alpha-lactalbumin (LALBA) from Felis catus (Cat).